The primary structure comprises 343 residues: Proto-oncogene serine/threonine-protein kinase mos (343 aa).

Residues 63-339 form the Protein kinase domain; it reads VCLMHRLGSG…LLQRDLKAFR (277 aa). ATP contacts are provided by residues 69–77 and Lys-90; that span reads LGSGGFGSV. Asp-198 functions as the Proton acceptor in the catalytic mechanism.

Belongs to the protein kinase superfamily. Ser/Thr protein kinase family. Interacts with MAP2K1/MEK1.

The protein localises to the cytoplasm. It catalyses the reaction L-seryl-[protein] + ATP = O-phospho-L-seryl-[protein] + ADP + H(+). The catalysed reaction is L-threonyl-[protein] + ATP = O-phospho-L-threonyl-[protein] + ADP + H(+). Functionally, serine/threonine kinase involved in the regulation of MAPK signaling. Is an activator of the ERK1/2 signaling cascade playing an essential role in the stimulation of oocyte maturation. The sequence is that of Proto-oncogene serine/threonine-protein kinase mos from Mus musculus (Mouse).